The chain runs to 139 residues: Ribulose bisphosphate carboxylase small subunit (139 aa).

This sequence belongs to the RuBisCO small chain family. Heterohexadecamer of 8 large and 8 small subunits.

The protein localises to the plastid. Its subcellular location is the chloroplast. Functionally, ruBisCO catalyzes two reactions: the carboxylation of D-ribulose 1,5-bisphosphate, the primary event in carbon dioxide fixation, as well as the oxidative fragmentation of the pentose substrate in the photorespiration process. Both reactions occur simultaneously and in competition at the same active site. Although the small subunit is not catalytic it is essential for maximal activity. This chain is Ribulose bisphosphate carboxylase small subunit, found in Thalassiosira nordenskioeldii (Marine diatom).